The sequence spans 212 residues: Ribonuclease HII (212 aa).

The 195-residue stretch at 17–211 (ANLAGIDEAG…VIEALLSLEQ (195 aa)) folds into the RNase H type-2 domain. Residues D23, E24, and D120 each contribute to the a divalent metal cation site.

It belongs to the RNase HII family. Mn(2+) serves as cofactor. Mg(2+) is required as a cofactor.

The protein resides in the cytoplasm. The enzyme catalyses Endonucleolytic cleavage to 5'-phosphomonoester.. Endonuclease that specifically degrades the RNA of RNA-DNA hybrids. In Chloroflexus aurantiacus (strain ATCC 29364 / DSM 637 / Y-400-fl), this protein is Ribonuclease HII.